Reading from the N-terminus, the 286-residue chain is 4-hydroxybenzoate octaprenyltransferase (286 aa).

7 helical membrane passes run 21–40 (GTLL…AGGM), 95–115 (ILFV…NGLV), 142–162 (FLGI…TGEV), 167–187 (WWLF…YAMV), 210–230 (QIIG…GWSA), 235–255 (LYGL…MLIF), and 266–286 (FLNN…DYLI).

The protein belongs to the UbiA prenyltransferase family. Requires Mg(2+) as cofactor.

The protein resides in the cell inner membrane. It carries out the reaction all-trans-octaprenyl diphosphate + 4-hydroxybenzoate = 4-hydroxy-3-(all-trans-octaprenyl)benzoate + diphosphate. The protein operates within cofactor biosynthesis; ubiquinone biosynthesis. Functionally, catalyzes the prenylation of para-hydroxybenzoate (PHB) with an all-trans polyprenyl group. Mediates the second step in the final reaction sequence of ubiquinone-8 (UQ-8) biosynthesis, which is the condensation of the polyisoprenoid side chain with PHB, generating the first membrane-bound Q intermediate 3-octaprenyl-4-hydroxybenzoate. In Shewanella baltica (strain OS185), this protein is 4-hydroxybenzoate octaprenyltransferase.